A 124-amino-acid chain; its full sequence is Large ribosomal subunit protein bL21 (124 aa).

The protein belongs to the bacterial ribosomal protein bL21 family. As to quaternary structure, part of the 50S ribosomal subunit. Contacts protein L20.

In terms of biological role, this protein binds to 23S rRNA in the presence of protein L20. This Synechococcus sp. (strain WH7803) protein is Large ribosomal subunit protein bL21.